The sequence spans 325 residues: Ribose-phosphate pyrophosphokinase 2 (325 aa).

Residue 96–101 (RQDKKD) participates in ATP binding. Mg(2+) contacts are provided by aspartate 135, histidine 137, aspartate 146, and aspartate 150. Residue histidine 137 coordinates ATP. The segment at 219–234 (KDRVAILVDDMADTCG) is binding of phosphoribosylpyrophosphate.

It belongs to the ribose-phosphate pyrophosphokinase family. As to quaternary structure, homodimer. The active form is probably a hexamer composed of 3 homodimers. It depends on Mg(2+) as a cofactor.

The enzyme catalyses D-ribose 5-phosphate + ATP = 5-phospho-alpha-D-ribose 1-diphosphate + AMP + H(+). It functions in the pathway metabolic intermediate biosynthesis; 5-phospho-alpha-D-ribose 1-diphosphate biosynthesis; 5-phospho-alpha-D-ribose 1-diphosphate from D-ribose 5-phosphate (route I): step 1/1. Its activity is regulated as follows. Activated by magnesium and inorganic phosphate. Competitively or non-competitively inhibited by ADP, 2,3-bisphosphoglyceride or GDP. Catalyzes the synthesis of phosphoribosylpyrophosphate (PRPP) that is essential for nucleotide synthesis. The chain is Ribose-phosphate pyrophosphokinase 2 (PRPS2) from Gallus gallus (Chicken).